The sequence spans 1110 residues: Envelopment polyprotein (1110 aa).

Positions 1–8 (MALKETDA) are excised as a propeptide. Residues 1 to 290 (MALKETDAKI…KYSKNIYKQT (290 aa)) lie on the Lumenal side of the membrane. The short motif at 14–16 (RGD) is the Cell attachment site element. Residues Asn-46 and Asn-92 are each glycosylated (N-linked (GlcNAc...) asparagine; by host). Disulfide bonds link Cys-90–Cys-121 and Cys-98–Cys-132. Residues 153–171 (IDNKRKLSIGTKFYIIESL) form a non-covalent dimerization region. A glycan (N-linked (GlcNAc...) asparagine; by host) is linked at Asn-186. Cysteines 200 and 261 form a disulfide. Residues 291-342 (ACINFSWFRLIMIALIVYFPIRYLVNKTSKTLFYGYDLLGLITYPILLLINY) traverse the membrane as a helical segment. At 343-459 (LWSYFPLKCK…VPGCDRFVTN (117 aa)) the chain is on the cytoplasmic side. At 460 to 1044 (RYDKCPEKDQ…HFGSFFDTVR (585 aa)) the chain is on the lumenal side. 3 N-linked (GlcNAc...) asparagine; by host glycosylation sites follow: Asn-566, Asn-582, and Asn-957. Residues 1045–1065 (VVLLILFVFALAYLCSIVATM) form a helical membrane-spanning segment. Over 1066–1110 (CRGYVRNKSYKTKYIEDTNDYSLVSTSSGKDTITRRRPPLDFSGI) the chain is Cytoplasmic. A disordered region spans residues 1091–1110 (TSSGKDTITRRRPPLDFSGI).

It belongs to the tospovirus envelope glycoprotein family. As to quaternary structure, homodimer; disulfide-linked. Heterodimer with Glycoprotein C. Interacts with nucleoprotein. In terms of assembly, heterodimer with Glycoprotein N. Interacts with nucleoprotein. Specific enzymatic cleavages in vivo yield mature proteins including Glycoprotein N and Glycoprotein C. Post-translationally, glycosylated with O-linked glycans. Glycosylation is essential for proper subcellular location. In terms of processing, cleaved at acidic pH.

It localises to the virion membrane. The protein localises to the host Golgi apparatus membrane. Its subcellular location is the host endoplasmic reticulum membrane. In terms of biological role, forms the spikes present at the surface of the virion together with Glycoprotein C. They are able to attach the virion to a cell receptor and to promote fusion of membranes after endocytosis of the virion. Plays a role in virus binding and/or entry into the vector midgut. Its function is as follows. Forms the spikes present at the surface of the virion together with Glycoprotein N. They are able to attach the virion to a cell receptor and to promote fusion of membranes after endocytosis of the virion. Probable class II fusion protein. The protein is Envelopment polyprotein (GP) of Impatiens necrotic spot virus (INSV).